Here is a 252-residue protein sequence, read N- to C-terminus: MTGRMPGLIVLFDVDGTLTAPRKAITPKMLEFMQDLRKVVTVGVVGGSDLVKISEQLGKSVISDYDYVFAENGLVAYKNGELIGKQNFKSFLGEEKLKELINFTLHYIADLDIPIKRGTFIEFRSGMLNVSPIGRNCSQEERDEFEKYDKVHNIRSKMVSVLREKFKHLNLTFSIGGQISFDVFPQGWDKTYCLRYLEDFPEIHFFGDKTYKGGNDYEIYESERTVGHTVTSPDDTAEQCKLHFLAKQAGDA.

Asp13 acts as the Nucleophile in catalysis. Mg(2+)-binding residues include Asp13 and Asp15. Asp15 (proton donor/acceptor) is an active-site residue. The alpha-D-mannose 1-phosphate site is built by Arg22, Arg124, Arg135, Arg142, Ser180, and Asp182. The Mg(2+) site is built by Asp208, Tyr220, and Thr225.

The protein belongs to the eukaryotic PMM family. Homodimer. Mg(2+) is required as a cofactor. In terms of tissue distribution, expressed in roots, leaves, stems and flowers.

It localises to the cytoplasm. It catalyses the reaction alpha-D-mannose 1-phosphate = D-mannose 6-phosphate. The protein operates within nucleotide-sugar biosynthesis; GDP-alpha-D-mannose biosynthesis; alpha-D-mannose 1-phosphate from D-fructose 6-phosphate: step 2/2. In terms of biological role, catalyzes the interconversion of mannose-6-phosphate to mannose-1-phosphate, the precursor for the synthesis of GDP-mannose. GDP-mannose is an essential sugar nucleotide for the synthesis of D-mannose-containing cell wall polysaccharides (galactomannans and glucomannans), glycolipids, glycoproteins and the antioxidant L-ascorbate. Involved in the biosynthesis of ascorbate and polysaccharides in response to abiotic stress during seed germination. This Dendrobium officinale (Orchid) protein is Phosphomannomutase.